Here is a 181-residue protein sequence, read N- to C-terminus: Cyclic AMP-dependent transcription factor ATF-3 (181 aa).

A disordered region spans residues Glu-73–Lys-97. Lys-78 is covalently cross-linked (Glycyl lysine isopeptide (Lys-Gly) (interchain with G-Cter in SUMO2)). The bZIP domain occupies Asp-86–His-149. The segment at Arg-88–Lys-110 is basic motif. A leucine-zipper region spans residues Leu-114–Leu-142. The residue at position 162 (Thr-162) is a Phosphothreonine. Residue Lys-175 forms a Glycyl lysine isopeptide (Lys-Gly) (interchain with G-Cter in SUMO2) linkage.

Belongs to the bZIP family. ATF subfamily. As to quaternary structure, binds DNA as a homodimer or a heterodimer. Interacts with KAT5; promoting KAT5 autoacetylation and KAT5 deubiquitination by USP7.

It is found in the nucleus. Its function is as follows. This protein binds the cAMP response element (CRE) (consensus: 5'-GTGACGT[AC][AG]-3'), a sequence present in many viral and cellular promoters. Represses transcription from promoters with ATF sites. It may repress transcription by stabilizing the binding of inhibitory cofactors at the promoter. The polypeptide is Cyclic AMP-dependent transcription factor ATF-3 (Mus musculus (Mouse)).